Consider the following 430-residue polypeptide: 3-phosphoshikimate 1-carboxyvinyltransferase (430 aa).

Positions 20, 21, and 25 each coordinate 3-phosphoshikimate. Lysine 20 is a binding site for phosphoenolpyruvate. Phosphoenolpyruvate contacts are provided by glycine 92 and arginine 120. Residues serine 166, glutamine 168, aspartate 312, and lysine 339 each contribute to the 3-phosphoshikimate site. Residue glutamine 168 participates in phosphoenolpyruvate binding. Aspartate 312 acts as the Proton acceptor in catalysis. The phosphoenolpyruvate site is built by arginine 343 and arginine 387.

This sequence belongs to the EPSP synthase family. Monomer.

The protein resides in the cytoplasm. The catalysed reaction is 3-phosphoshikimate + phosphoenolpyruvate = 5-O-(1-carboxyvinyl)-3-phosphoshikimate + phosphate. Its pathway is metabolic intermediate biosynthesis; chorismate biosynthesis; chorismate from D-erythrose 4-phosphate and phosphoenolpyruvate: step 6/7. Functionally, catalyzes the transfer of the enolpyruvyl moiety of phosphoenolpyruvate (PEP) to the 5-hydroxyl of shikimate-3-phosphate (S3P) to produce enolpyruvyl shikimate-3-phosphate and inorganic phosphate. In Lactococcus lactis subsp. cremoris (strain MG1363), this protein is 3-phosphoshikimate 1-carboxyvinyltransferase.